The primary structure comprises 444 residues: Glycine receptor subunit alphaZ1 (444 aa).

The signal sequence occupies residues 1–24 (MFALGIYLWETIVFFSLAASQQAA). Topologically, residues 25 to 246 (ARKAASPMPP…RFHLERQMGY (222 aa)) are extracellular. Residue Asn-62 is glycosylated (N-linked (GlcNAc...) asparagine). The glycine site is built by Arg-89 and Ser-153. Cysteines 162 and 176 form a disulfide. Glu-216 and Asp-218 together coordinate Zn(2+). A disulfide bridge connects residues Cys-222 and Cys-233. 226-231 (YNTGKF) contacts strychnine. Thr-228 serves as a coordination point for glycine. His-239 is a Zn(2+) binding site. Residues 247 to 268 (YLIQMYIPSLLIVILSWVSFWI) traverse the membrane as a helical segment. At 269-273 (NMDAA) the chain is on the cytoplasmic side. A helical transmembrane segment spans residues 274–294 (PARVGLGITTVLTMTTQSSGS). At 295-305 (RASLPKVSYVK) the chain is on the extracellular side. A helical membrane pass occupies residues 306-326 (AIDIWMAVCLLFVFSALLEYA). Over 327 to 412 (AVNFIARQHK…FISRAKRIDT (86 aa)) the chain is Cytoplasmic. The helical transmembrane segment at 413-433 (VSRVAFPLVFLIFNIFYWITY) threads the bilayer. Topologically, residues 434–444 (KIIRSEDIHKQ) are extracellular.

The protein belongs to the ligand-gated ion channel (TC 1.A.9) family. Glycine receptor (TC 1.A.9.3) subfamily. GLRA1 sub-subfamily. In terms of assembly, homopentamer (in vitro). Heteropentamer composed of glra1 and glrb. Both homopentamers and heteropentamers form functional ion channels. Interacts with glrb. As to expression, expressed in brain.

It is found in the postsynaptic cell membrane. Its subcellular location is the synapse. The protein resides in the perikaryon. The protein localises to the cell projection. It localises to the dendrite. It is found in the cell membrane. The catalysed reaction is chloride(in) = chloride(out). Its activity is regulated as follows. Activated by glycine and taurine. Inhibited by strychnine. Allosterically activated by ivermectin. Inhibited by picrotoxinin. Strychnine binding locks the channel in a closed conformation and prevents channel opening in response to extracellular glycine. Can also be activated by GABA and inhibited by bicuculline, but this requires heterologous expression in human cells. Its function is as follows. Subunit of heteromeric glycine-gated chloride channels. Plays an important role in the down-regulation of neuronal excitability. Contributes to the generation of inhibitory postsynaptic currents. Channel activity is potentiated by ethanol. The chain is Glycine receptor subunit alphaZ1 (glra1) from Danio rerio (Zebrafish).